Reading from the N-terminus, the 889-residue chain is Cytoplasmic aconitate hydratase (889 aa).

Substrate contacts are provided by residues Gln86 and Asp205 to His207. [4Fe-4S] cluster contacts are provided by Cys437, Cys503, and Cys506. Substrate is bound by residues Arg536, Arg541, Arg699, and Ser779–Arg780.

This sequence belongs to the aconitase/IPM isomerase family. The cofactor is [4Fe-4S] cluster.

The protein resides in the cytoplasm. The protein localises to the cytosol. It carries out the reaction citrate = D-threo-isocitrate. In terms of biological role, bifunctional iron sensor that switches between 2 activities depending on iron availability. Iron deprivation, promotes its mRNA binding activity through which it regulates the expression of genes involved in iron uptake, sequestration and utilization. Binds to iron-responsive elements (IRES) in the untranslated region of target mRNAs preventing for instance the translation of ferritin and aminolevulinic acid synthase and stabilizing the transferrin receptor mRNA. Conversely, when cellular iron levels are high, binds a 4Fe-4S cluster which precludes RNA binding activity and promotes the aconitase activity, the isomerization of citrate to isocitrate via cis-aconitate. The polypeptide is Cytoplasmic aconitate hydratase (ACO1) (Gallus gallus (Chicken)).